We begin with the raw amino-acid sequence, 348 residues long: Nicotinate-nucleotide--dimethylbenzimidazole phosphoribosyltransferase (348 aa).

The Proton acceptor role is filled by E317.

It belongs to the CobT family.

The enzyme catalyses 5,6-dimethylbenzimidazole + nicotinate beta-D-ribonucleotide = alpha-ribazole 5'-phosphate + nicotinate + H(+). The protein operates within nucleoside biosynthesis; alpha-ribazole biosynthesis; alpha-ribazole from 5,6-dimethylbenzimidazole: step 1/2. Catalyzes the synthesis of alpha-ribazole-5'-phosphate from nicotinate mononucleotide (NAMN) and 5,6-dimethylbenzimidazole (DMB). The chain is Nicotinate-nucleotide--dimethylbenzimidazole phosphoribosyltransferase from Clostridioides difficile (strain 630) (Peptoclostridium difficile).